The following is a 707-amino-acid chain: ATP-dependent zinc metalloprotease FtsH (707 aa).

The Cytoplasmic segment spans residues 1–25 (MSELDNKKDKSKDSNKKPKKPGAFS). The chain crosses the membrane as a helical span at residues 26-46 (IGNIIIFVIVALLLIWVVFAF). The Extracellular portion of the chain corresponds to 47-128 (LPNNPGTNKS…GTTFTGLELA (82 aa)). A helical membrane pass occupies residues 129 to 149 (TLAIANTSASGIGTLNFSGLV). Residues 150 to 707 (TPTNQALAIL…IKTDESLDIK (558 aa)) are Cytoplasmic-facing. An ATP-binding site is contributed by 246-253 (GPPGTGKT). Position 468 (histidine 468) interacts with Zn(2+). Residue glutamate 469 is part of the active site. Histidine 472 and aspartate 546 together coordinate Zn(2+).

It in the central section; belongs to the AAA ATPase family. This sequence in the C-terminal section; belongs to the peptidase M41 family. As to quaternary structure, homohexamer. The cofactor is Zn(2+).

The protein localises to the cell membrane. Acts as a processive, ATP-dependent zinc metallopeptidase for both cytoplasmic and membrane proteins. Plays a role in the quality control of integral membrane proteins. The polypeptide is ATP-dependent zinc metalloprotease FtsH (Mycoplasma mobile (strain ATCC 43663 / 163K / NCTC 11711) (Mesomycoplasma mobile)).